A 439-amino-acid chain; its full sequence is Iron-sulfur cluster assembly factor IBA57 homolog, mitochondrial (439 aa).

The transit peptide at 1–72 directs the protein to the mitochondrion; it reads MQPATRSIAV…RLISVSGPDA (72 aa).

It belongs to the GcvT family. CAF17/IBA57 subfamily.

It is found in the mitochondrion matrix. The sequence is that of Iron-sulfur cluster assembly factor IBA57 homolog, mitochondrial (caf-17) from Neurospora crassa (strain ATCC 24698 / 74-OR23-1A / CBS 708.71 / DSM 1257 / FGSC 987).